A 98-amino-acid chain; its full sequence is Large ribosomal subunit protein uL23 (98 aa).

It belongs to the universal ribosomal protein uL23 family. In terms of assembly, part of the 50S ribosomal subunit. Contacts protein L29, and trigger factor when it is bound to the ribosome.

One of the early assembly proteins it binds 23S rRNA. One of the proteins that surrounds the polypeptide exit tunnel on the outside of the ribosome. Forms the main docking site for trigger factor binding to the ribosome. This chain is Large ribosomal subunit protein uL23, found in Marinomonas sp. (strain MWYL1).